The primary structure comprises 216 residues: LexA repressor 1 (216 aa).

A DNA-binding region (H-T-H motif) is located at residues 38–58; the sequence is TRQIGAAVGLRSMSSVARHLR. Catalysis depends on for autocatalytic cleavage activity residues Ser140 and Lys177.

The protein belongs to the peptidase S24 family. Homodimer.

It catalyses the reaction Hydrolysis of Ala-|-Gly bond in repressor LexA.. Its function is as follows. Represses a number of genes involved in the response to DNA damage (SOS response), including recA and lexA. In the presence of single-stranded DNA, RecA interacts with LexA causing an autocatalytic cleavage which disrupts the DNA-binding part of LexA, leading to derepression of the SOS regulon and eventually DNA repair. The sequence is that of LexA repressor 1 from Nocardia farcinica (strain IFM 10152).